We begin with the raw amino-acid sequence, 140 residues long: uncharacterized protein (140 aa).

2 helical membrane passes run 4–21 (ILKF…YLFG) and 26–48 (LVKV…SGYL).

This sequence belongs to the bacteriophage holin family. Cp-1 holin subfamily.

It is found in the cell membrane. This is an uncharacterized protein from Listeria monocytogenes serovar 1/2a (strain ATCC BAA-679 / EGD-e).